The sequence spans 365 residues: Chorismate synthase (365 aa).

Residues R48 and R54 each contribute to the NADP(+) site. Residues R125–S127, N238–A239, A278, K293–S297, and R319 contribute to the FMN site.

Belongs to the chorismate synthase family. In terms of assembly, homotetramer. It depends on FMNH2 as a cofactor.

It carries out the reaction 5-O-(1-carboxyvinyl)-3-phosphoshikimate = chorismate + phosphate. It participates in metabolic intermediate biosynthesis; chorismate biosynthesis; chorismate from D-erythrose 4-phosphate and phosphoenolpyruvate: step 7/7. Its function is as follows. Catalyzes the anti-1,4-elimination of the C-3 phosphate and the C-6 proR hydrogen from 5-enolpyruvylshikimate-3-phosphate (EPSP) to yield chorismate, which is the branch point compound that serves as the starting substrate for the three terminal pathways of aromatic amino acid biosynthesis. This reaction introduces a second double bond into the aromatic ring system. The protein is Chorismate synthase of Pseudoalteromonas translucida (strain TAC 125).